The chain runs to 121 residues: Flagellar protein FliT (121 aa).

A required for homodimerization region spans residues 1 to 50 (MNHAPHLYFAWQQLVEKSQLMLRLATEEQWDELIASEMAYVNAVQEIAHL). The segment at 60-98 (MQEQLRPMLRLILDNESKVKQLLQIRMDELAKLVGQSSV) is fliD binding.

Belongs to the FliT family. Homodimer. Interacts with FliD and FlhC.

The protein localises to the cytoplasm. It localises to the cytosol. In terms of biological role, dual-function protein that regulates the transcription of class 2 flagellar operons and that also acts as an export chaperone for the filament-capping protein FliD. As a transcriptional regulator, acts as an anti-FlhDC factor; it directly binds FlhC, thus inhibiting the binding of the FlhC/FlhD complex to class 2 promoters, resulting in decreased expression of class 2 flagellar operons. As a chaperone, effects FliD transition to the membrane by preventing its premature polymerization, and by directing it to the export apparatus. This Escherichia coli O139:H28 (strain E24377A / ETEC) protein is Flagellar protein FliT.